The chain runs to 456 residues: Glycine--tRNA ligase (456 aa).

Residues R98 and E168 each contribute to the substrate site. ATP contacts are provided by residues 200–202 (RNE), 210–215 (FRTREF), 285–286 (EL), and 329–332 (GVER). 215–219 (FEQME) serves as a coordination point for substrate. Substrate is bound at residue 325 to 329 (EPSVG).

This sequence belongs to the class-II aminoacyl-tRNA synthetase family. Homodimer.

It localises to the cytoplasm. The catalysed reaction is tRNA(Gly) + glycine + ATP = glycyl-tRNA(Gly) + AMP + diphosphate. Catalyzes the attachment of glycine to tRNA(Gly). In Mycoplasma mycoides subsp. mycoides SC (strain CCUG 32753 / NCTC 10114 / PG1), this protein is Glycine--tRNA ligase.